The sequence spans 768 residues: Lon protease (768 aa).

The 195-residue stretch at 4 to 198 (APFLPIRDLV…RILDEIVAEM (195 aa)) folds into the Lon N-terminal domain. 349 to 356 (GPPGIGKT) provides a ligand contact to ATP. Residues 586–768 (TGKIGVVNGL…DDVSKLVFVK (183 aa)) enclose the Lon proteolytic domain. Residues Ser674 and Lys717 contribute to the active site.

This sequence belongs to the peptidase S16 family. In terms of assembly, homohexamer. Organized in a ring with a central cavity.

It localises to the cytoplasm. The catalysed reaction is Hydrolysis of proteins in presence of ATP.. Its function is as follows. ATP-dependent serine protease that mediates the selective degradation of mutant and abnormal proteins as well as certain short-lived regulatory proteins. Required for cellular homeostasis and for survival from DNA damage and developmental changes induced by stress. Degrades polypeptides processively to yield small peptide fragments that are 5 to 10 amino acids long. Binds to DNA in a double-stranded, site-specific manner. The polypeptide is Lon protease (Fusobacterium nucleatum subsp. nucleatum (strain ATCC 25586 / DSM 15643 / BCRC 10681 / CIP 101130 / JCM 8532 / KCTC 2640 / LMG 13131 / VPI 4355)).